Reading from the N-terminus, the 249-residue chain is Small ribosomal subunit protein uS2 (249 aa).

Belongs to the universal ribosomal protein uS2 family.

This chain is Small ribosomal subunit protein uS2, found in Chlorobaculum tepidum (strain ATCC 49652 / DSM 12025 / NBRC 103806 / TLS) (Chlorobium tepidum).